The following is a 317-amino-acid chain: Neurogenic differentiation factor 6-B (317 aa).

Disordered regions lie at residues 1-90 (MLTV…ERSR) and 297-317 (DLHP…GYHN). Positions 37–56 (EAEDDNTDREEEEEREEDEN) are enriched in acidic residues. The span at 59–69 (PKKKGPRKKKS) shows a compositional bias: basic residues. A Nuclear localization signal motif is present at residues 65 to 70 (RKKKSE). Residues 70 to 90 (EGRGDRVKMRRQEANARERSR) are compositionally biased toward basic and acidic residues. The bHLH domain occupies 78-130 (MRRQEANARERSRMHGLNDALESLRKVVPCYSKTQKLSKIETLRLAKNYIWAL). The segment covering 301 to 317 (RSQSFQSQDELNTGYHN) has biased composition (polar residues).

In terms of assembly, efficient DNA binding requires dimerization with another bHLH protein. Embryonic olfactory bulbs and olfactory placodes. In adult, expressed in brain and eye.

The protein resides in the nucleus. Functionally, differentiation factor required for neurogenesis. Does not act as an upstream activator of isl1. This Danio rerio (Zebrafish) protein is Neurogenic differentiation factor 6-B.